The sequence spans 205 residues: Protease (205 aa).

Catalysis depends on residues histidine 55, aspartate 72, and cysteine 122.

It belongs to the peptidase C5 family. As to quaternary structure, interacts with protease cofactor pVI-C; this interaction is necessary for protease activation.

Its subcellular location is the virion. The protein localises to the host nucleus. It catalyses the reaction Cleaves proteins of the adenovirus and its host cell at two consensus sites: -Yaa-Xaa-Gly-Gly-|-Xaa- and -Yaa-Xaa-Gly-Xaa-|-Gly- (in which Yaa is Met, Ile or Leu, and Xaa is any amino acid).. Requires DNA and protease cofactor for maximal activation. Inside nascent virions, becomes partially activated by binding to the viral DNA, allowing it to cleave the cofactor that binds to the protease and fully activates it. Actin, like the viral protease cofactor, seems to act as a cofactor in the cleavage of cytokeratin 18 and of actin itself. Its function is as follows. Cleaves viral precursor proteins (pTP, pIIIa, pVI, pVII, pVIII, and pX) inside newly assembled particles giving rise to mature virions. Protease complexed to its cofactor slides along the viral DNA to specifically locate and cleave the viral precursors. Mature virions have a weakened organization compared to the unmature virions, thereby facilitating subsequent uncoating. Without maturation, the particle lacks infectivity and is unable to uncoat. Late in adenovirus infection, in the cytoplasm, may participate in the cytoskeleton destruction. Cleaves host cell cytoskeletal keratins K7 and K18. This chain is Protease, found in Galliformes (FAdV-8).